A 30-amino-acid chain; its full sequence is Snaclec coagulation factor IX/factor X-binding protein subunit A (30 aa).

Positions 1–30 (DCPSDWSPYEGHCYKHFIKWMNNEDAERFC) constitute a C-type lectin domain. A disulfide bridge links Cys-2 with Cys-13.

Belongs to the snaclec family. In terms of assembly, heterodimer of subunits A and B; disulfide-linked. In terms of tissue distribution, expressed by the venom gland.

The protein localises to the secreted. In terms of biological role, anticoagulant protein which binds to the gamma-carboxyglutamic acid-domain regions of factors IX (F9) and factor X (F10) in the presence of calcium with a 1 to 1 stoichiometry. This chain is Snaclec coagulation factor IX/factor X-binding protein subunit A, found in Bothrops jararaca (Jararaca).